A 36-amino-acid polypeptide reads, in one-letter code: Cytochrome b6-f complex subunit 7 (36 aa).

The chain crosses the membrane as a helical span at residues 5–25 (IFFVAGLVFVLTLVGMAIGFG).

Belongs to the PetM family. As to quaternary structure, the 4 large subunits of the cytochrome b6-f complex are cytochrome b6, subunit IV (17 kDa polypeptide, PetD), cytochrome f and the Rieske protein, while the 4 small subunits are PetG, PetL, PetM and PetN. The complex functions as a dimer.

Its subcellular location is the cell inner membrane. Functionally, component of the cytochrome b6-f complex, which mediates electron transfer between photosystem II (PSII) and photosystem I (PSI), cyclic electron flow around PSI, and state transitions. The sequence is that of Cytochrome b6-f complex subunit 7 from Gloeobacter violaceus (strain ATCC 29082 / PCC 7421).